Reading from the N-terminus, the 455-residue chain is tRNA-2-methylthio-N(6)-dimethylallyladenosine synthase (455 aa).

One can recognise an MTTase N-terminal domain in the interval K18–T136. Residues C27, C63, C97, C173, C177, and C180 each contribute to the [4Fe-4S] cluster site. Positions R159–K389 constitute a Radical SAM core domain. A TRAM domain is found at K392–K455.

It belongs to the methylthiotransferase family. MiaB subfamily. Monomer. The cofactor is [4Fe-4S] cluster.

The protein localises to the cytoplasm. The enzyme catalyses N(6)-dimethylallyladenosine(37) in tRNA + (sulfur carrier)-SH + AH2 + 2 S-adenosyl-L-methionine = 2-methylsulfanyl-N(6)-dimethylallyladenosine(37) in tRNA + (sulfur carrier)-H + 5'-deoxyadenosine + L-methionine + A + S-adenosyl-L-homocysteine + 2 H(+). Its function is as follows. Catalyzes the methylthiolation of N6-(dimethylallyl)adenosine (i(6)A), leading to the formation of 2-methylthio-N6-(dimethylallyl)adenosine (ms(2)i(6)A) at position 37 in tRNAs that read codons beginning with uridine. The sequence is that of tRNA-2-methylthio-N(6)-dimethylallyladenosine synthase from Clostridium beijerinckii (strain ATCC 51743 / NCIMB 8052) (Clostridium acetobutylicum).